Here is a 482-residue protein sequence, read N- to C-terminus: C3a anaphylatoxin chemotactic receptor (482 aa).

At 1-23 (MASFSAETNSTDLLSQPWNEPPV) the chain is on the extracellular side. N-linked (GlcNAc...) asparagine glycosylation occurs at Asn9. A helical transmembrane segment spans residues 24 to 46 (ILSMVILSLTFLLGLPGNGLVLW). At 47–57 (VAGLKMQRTVN) the chain is on the cytoplasmic side. A helical membrane pass occupies residues 58–80 (TVWFLHLTLADLLCCLSLPFSLA). The Extracellular segment spans residues 81–96 (HLALQGQWPYGRFLCE). A disulfide bond links Cys95 and Cys172. The chain crosses the membrane as a helical span at residues 97–118 (LIPSIIVLNMFASVFLLTAISL). The Cytoplasmic segment spans residues 119-139 (DRCLVVFKPIWCQNHRNVGTA). Residues 140-160 (CSICGCIWVVAFVMCIPVFVY) form a helical membrane-spanning segment. Topologically, residues 161–340 (REIFTADNHN…TPLVAITITR (180 aa)) are extracellular. Sulfotyrosine occurs at positions 174 and 184. N-linked (GlcNAc...) asparagine glycosylation occurs at Asn194. The residue at position 318 (Tyr318) is a Sulfotyrosine. Residues 341-360 (LVVGFLLPSVIMIACYSFIV) traverse the membrane as a helical segment. The Cytoplasmic segment spans residues 361–377 (FRMQRGRFAKSQSKTFR). A helical transmembrane segment spans residues 378 to 400 (VAVVVVAVFLVCWTPYHIFGVLS). At 401-417 (LLIDPESPLGKTLMSWD) the chain is on the extracellular side. The helical transmembrane segment at 418–438 (HVSIALASANSCFNPFLYALL) threads the bilayer. Over 439-482 (GKDFRKKARQSIQGILEAAFSEELTRSTHCNSNNVFSERNSTTV) the chain is Cytoplasmic. Position 459 is a phosphoserine (Ser459). Thr463 bears the Phosphothreonine mark.

It belongs to the G-protein coupled receptor 1 family. In terms of assembly, interacts with VGF-derived peptide TLQP-21. In terms of processing, among the sulfation sites Tyr-174 is essential for binding of C3a anaphylatoxin.

It localises to the cell membrane. Receptor for the chemotactic and inflammatory peptide anaphylatoxin C3a. This receptor stimulates chemotaxis, granule enzyme release and superoxide anion production. In Pongo abelii (Sumatran orangutan), this protein is C3a anaphylatoxin chemotactic receptor (C3AR1).